The sequence spans 129 residues: Ergosterol biosynthetic protein 28 (129 aa).

4 consecutive transmembrane segments (helical) span residues 4 to 24 (LGYW…FGFF), 46 to 66 (TFGV…FNLE), 71 to 91 (YLAT…EYLF), and 96 to 116 (TIAN…WMLL).

It belongs to the ERG28 family.

The protein resides in the endoplasmic reticulum membrane. The sequence is that of Ergosterol biosynthetic protein 28 from Arabidopsis thaliana (Mouse-ear cress).